We begin with the raw amino-acid sequence, 668 residues long: MKHYSIQPANLEFNAEGTPVSRDFDDVYFSNDNGLEETRYVFLGGNQLEARFPEHPHPLFVVAESGFGTGLNFLTLWQAFDQFREAHPQAQLQRLHFISFEKFPLTRADLALAHQHWPELAPWAEQLQAQWPMPLPGCHRLLLDEGRVTLDLWFGDINELISQLDDSLNQKVDAWFLDGFAPAKNPDMWTQNLFNAMARLARPGGTLATFTSAGFVRRGLQEAGFTMQKRKGFGRKREMLCGVMEQTLPLPCSTPWFNRTGSSKREVAIIGGGIASALLSLALLRRGWQVTLYCADEAPALGASGNRQGALYPLLSKHDEALNRFFSNGFTFARRLYDSLPVKFDHDWCGVTQLGWDEKSQHKIAQMLSMDLPEELAVAVEANAVEQITGVTTNCSGITYPQGGWLCPAELTRNVLELAQQQGLQIYYQYQLQDLSRKDDCWLLTFAGDQQATHSVVVLANGHQISRFSQTSSLPVYSVAGQVSHIPTTPELAKLKQVLCYDGYLTPQNPANQHHCIGASYHRGSEETAYSEDNQQQNRQRLIDCFPHAQWAKTVDVSKKEARCGVRCATRDHLPMVGNVPDYEATLVEYASLAEQKDKAVSAPVFDDLFMFAALGSRGLCSAPLCAEILAAQMSDEPIPMDASTLAALNPNRLWVRKLLKGKAVKAG.

Positions 1–245 are tRNA (mnm(5)s(2)U34)-methyltransferase; it reads MKHYSIQPAN…KREMLCGVME (245 aa). The tract at residues 270–668 is FAD-dependent cmnm(5)s(2)U34 oxidoreductase; the sequence is IGGGIASALL…LLKGKAVKAG (399 aa).

The protein in the N-terminal section; belongs to the methyltransferase superfamily. tRNA (mnm(5)s(2)U34)-methyltransferase family. In the C-terminal section; belongs to the DAO family. FAD serves as cofactor.

The protein resides in the cytoplasm. It catalyses the reaction 5-aminomethyl-2-thiouridine(34) in tRNA + S-adenosyl-L-methionine = 5-methylaminomethyl-2-thiouridine(34) in tRNA + S-adenosyl-L-homocysteine + H(+). In terms of biological role, catalyzes the last two steps in the biosynthesis of 5-methylaminomethyl-2-thiouridine (mnm(5)s(2)U) at the wobble position (U34) in tRNA. Catalyzes the FAD-dependent demodification of cmnm(5)s(2)U34 to nm(5)s(2)U34, followed by the transfer of a methyl group from S-adenosyl-L-methionine to nm(5)s(2)U34, to form mnm(5)s(2)U34. The chain is tRNA 5-methylaminomethyl-2-thiouridine biosynthesis bifunctional protein MnmC from Escherichia coli O157:H7.